A 296-amino-acid chain; its full sequence is Protoheme IX farnesyltransferase (296 aa).

A run of 9 helical transmembrane segments spans residues 11–31 (PGII…AAQG), 35–55 (YPLF…GCVF), 84–104 (VTLV…YIAA), 107–127 (LAMW…SLYM), 132–152 (VYGT…GYCA), 162–182 (LILL…IAIF), 208–228 (ITLY…GGYA), 229–249 (GYKY…MALS), and 264–284 (LFVF…VDSM).

The protein belongs to the UbiA prenyltransferase family. Protoheme IX farnesyltransferase subfamily.

The protein resides in the cell inner membrane. The enzyme catalyses heme b + (2E,6E)-farnesyl diphosphate + H2O = Fe(II)-heme o + diphosphate. It participates in porphyrin-containing compound metabolism; heme O biosynthesis; heme O from protoheme: step 1/1. Converts heme B (protoheme IX) to heme O by substitution of the vinyl group on carbon 2 of heme B porphyrin ring with a hydroxyethyl farnesyl side group. The sequence is that of Protoheme IX farnesyltransferase from Pectobacterium carotovorum subsp. carotovorum (strain PC1).